The primary structure comprises 100 residues: MAKKSMIARDVKRKKIVERYAAKRAALMAAFDAAKDPMQRLEIHRKIQALPRNSAPTRIRNRCWATGKPRGVYRDFGLCRNQLRERAHKGELPGVVKSSW.

This sequence belongs to the universal ribosomal protein uS14 family. Part of the 30S ribosomal subunit. Contacts proteins S3 and S10.

Functionally, binds 16S rRNA, required for the assembly of 30S particles and may also be responsible for determining the conformation of the 16S rRNA at the A site. The protein is Small ribosomal subunit protein uS14 of Prochlorococcus marinus (strain MIT 9303).